The chain runs to 253 residues: uncharacterized protein (253 aa).

NADP(+) contacts are provided by Ile17, Ser36, Asp62, Asn89, Tyr158, Lys162, Val191, and Thr193. The Proton donor role is filled by Tyr158. Catalysis depends on Lys162, which acts as the Lowers pKa of active site Tyr.

Belongs to the short-chain dehydrogenases/reductases (SDR) family.

It is found in the cytoplasm. It localises to the nucleus. This is an uncharacterized protein from Schizosaccharomyces pombe (strain 972 / ATCC 24843) (Fission yeast).